Reading from the N-terminus, the 473-residue chain is P3 protein (473 aa).

Helical transmembrane passes span 25 to 45, 221 to 241, 249 to 269, 277 to 297, 316 to 336, 356 to 376, 381 to 401, 413 to 433, and 446 to 466; these read FVGMLGTALLFISLPWGAQVM, PMLLGLLGQFLVMPFYAFLMA, ALALGLIITCSSPGGGGSYLF, VTLAISMTFISTVAATGFLPL, ISKILGTLLFIAIPIAAGVVI, FILLLGGLFLAYHMGVFILVG, IVLVGFTVPLVGLLVGYSLAI, VSIEVGVQNSLLALAMLQLSL, and FIVALSGTSEMLALVIGQFIY.

Belongs to the bile acid:sodium symporter (BASS) (TC 2.A.28) family.

It localises to the membrane. In terms of biological role, the ubiquitous expression and the conservation of the sequence in distant animal species suggest that the gene codes for a protein with housekeeping functions. This Mus musculus (Mouse) protein is P3 protein (Slc10a3).